A 347-amino-acid chain; its full sequence is NHL repeat-containing protein 3 (347 aa).

The signal sequence occupies residues 1–25 (MARFWVCVAGAGFFLAFLVLHSRFC). N-linked (GlcNAc...) asparagine glycosylation is present at Asn-32. The NHL 1 repeat unit spans residues 47 to 93 (RLDVGWPKHPEYFTGTTFCVAVDSLNGLVYIGQRGDNIPKILVFTED). An N-linked (GlcNAc...) asparagine glycan is attached at Asn-101. NHL repeat units follow at residues 150–196 (TPGK…LSQD) and 200–243 (LWLH…FDKD). N-linked (GlcNAc...) asparagine glycosylation is found at Asn-206 and Asn-278. An NHL 4 repeat occupies 294–338 (GECSVISTIQLADQVLPHLLEVDRKTGAVYVAEIGAKQVQKYVPL).

The protein localises to the secreted. This Homo sapiens (Human) protein is NHL repeat-containing protein 3 (NHLRC3).